We begin with the raw amino-acid sequence, 202 residues long: Nudix hydrolase 13, mitochondrial (202 aa).

Residues 18 to 167 form the Nudix hydrolase domain; sequence NFRLVSGCIP…WMQSALEEFL (150 aa). Residues 65–86 carry the Nudix box motif; it reads GGWEDDETVLEAASREAMEEAG. 2 residues coordinate Mg(2+): E80 and E84.

Belongs to the Nudix hydrolase family. In terms of assembly, monomer. Requires Mg(2+) as cofactor. Expressed in roots, leaves, stems and inflorescences.

It is found in the mitochondrion. Inhibited by fluoride. In terms of biological role, mediates the hydrolysis of some nucleoside diphosphate derivatives. Can use diadenosine 5',5'''-P(1)P(6) hexaphosphate (Ap(6)A), diadenosine 5',5'''-P(1)P(5) pentaphosphate (Ap(5)A) and adenosine tetraphosphate (p(4)A) as substrates, but not diadenosine 5',5'''-P(1)P(4) tetraphosphate (Ap(4)A), diadenosine 5',5'''-P(1)P(3) triphosphate (Ap(3)A), deoxyribonucleoside triphosphates, ribonucleoside triphosphates, diphosphoinositol pentakisphosphate (PP-InsP(5)) and 5-phospho-alpha-D-ribosyl diphosphate (PRPP). The protein is Nudix hydrolase 13, mitochondrial (NUDT13) of Arabidopsis thaliana (Mouse-ear cress).